A 638-amino-acid polypeptide reads, in one-letter code: Probable beta-glucosidase C (638 aa).

Positions 1-18 (MKVLAPGYLAEASLTALA) are cleaved as a signal peptide. N40, N94, N116, N223, and N274 each carry an N-linked (GlcNAc...) asparagine glycan. D341 is an active-site residue. N364, N480, N488, and N528 each carry an N-linked (GlcNAc...) asparagine glycan.

The protein belongs to the glycosyl hydrolase 3 family.

The protein resides in the secreted. It catalyses the reaction Hydrolysis of terminal, non-reducing beta-D-glucosyl residues with release of beta-D-glucose.. It functions in the pathway glycan metabolism; cellulose degradation. In terms of biological role, beta-glucosidases are one of a number of cellulolytic enzymes involved in the degradation of cellulosic biomass. Catalyzes the last step releasing glucose from the inhibitory cellobiose. This chain is Probable beta-glucosidase C (bglC), found in Aspergillus oryzae (strain ATCC 42149 / RIB 40) (Yellow koji mold).